The primary structure comprises 194 residues: uncharacterized protein (194 aa).

The interval 62 to 93 (GGAGRRTSKAQRVHPQPSHQRQPPPPQHPGPY) is disordered.

Expressed most abundantly in the brain at protein level. Present in cortex, cerebellum and midbrain. Found in neurons. Elevated expressions detected in Alzheimer brain samples. Also expressed in testis.

It localises to the cytoplasm. This is an uncharacterized protein from Homo sapiens (Human).